We begin with the raw amino-acid sequence, 278 residues long: C-type lectin domain family 1 member A (278 aa).

The disordered stretch occupies residues 1–42 (MLAKYSSTRDMLDADGDTTMSLHSQASATSQRPELGHTEHQR). Residues 1–52 (MLAKYSSTRDMLDADGDTTMSLHSQASATSQRPELGHTEHQRPSSAWRPVAL) lie on the Cytoplasmic side of the membrane. The span at 18-32 (TTMSLHSQASATSQR) shows a compositional bias: polar residues. Residues 53-73 (ILLTLCLVLLIGLAALGLVFF) traverse the membrane as a helical; Signal-anchor for type II membrane protein segment. The Extracellular segment spans residues 74–278 (QFYQLSNTQQ…LHEPLSRRWR (205 aa)). N-linked (GlcNAc...) asparagine glycosylation is found at Asn-95 and Asn-169. A C-type lectin domain is found at 144–258 (HGDKCYQFYK…CRELRRCACE (115 aa)). 2 disulfide bridges follow: Cys-165/Cys-257 and Cys-236/Cys-249.

It is found in the membrane. The chain is C-type lectin domain family 1 member A (CLEC1A) from Bos taurus (Bovine).